Consider the following 57-residue polypeptide: Phosphatase RapH inhibitor (57 aa).

Propeptides lie at residues 1–34 (MPIKKKVMMCLAVTLVFGSMSFPTLTNSGGFKES) and 41–57 (YIDHSPYKLSDQKKALS). The interval 26–57 (TNSGGFKESTDRNTTYIDHSPYKLSDQKKALS) is disordered.

This sequence belongs to the Phr family. Post-translationally, contains a predicted signal peptide cleavage site in the N-terminal region, however the propeptide is probably only subject to processing events at the ends of the mature peptide.

The protein resides in the secreted. It is found in the cytoplasm. In terms of biological role, signaling molecule involved the regulation of both sporulation and competence. Secreted during production, but the mature peptide acts intracellularly, indicating that it needs to be imported into the cell to function. Acts by inhibiting RapH activity. Can inhibit both RapH activities, the dephosphorylation of Spo0F and the sequestration of ComA. The sequence is that of Phosphatase RapH inhibitor (phrH) from Bacillus subtilis (strain 168).